A 179-amino-acid chain; its full sequence is Inorganic pyrophosphatase (179 aa).

3 residues coordinate substrate: lysine 30, arginine 44, and tyrosine 56. Residues aspartate 66, aspartate 71, and aspartate 103 each contribute to the Mg(2+) site. Tyrosine 143 is a binding site for substrate.

This sequence belongs to the PPase family. As to quaternary structure, homohexamer. It depends on Mg(2+) as a cofactor.

The protein resides in the cytoplasm. It carries out the reaction diphosphate + H2O = 2 phosphate + H(+). Its function is as follows. Catalyzes the hydrolysis of inorganic pyrophosphate (PPi) forming two phosphate ions. This chain is Inorganic pyrophosphatase, found in Wigglesworthia glossinidia brevipalpis.